A 522-amino-acid chain; its full sequence is 2-isopropylmalate synthase (522 aa).

Residues 5–267 (VIIFDTTLRD…ETGINAKEIH (263 aa)) form the Pyruvate carboxyltransferase domain. Mn(2+) contacts are provided by D14, H202, H204, and N238. The tract at residues 392–522 (QLQQLVVQSD…MQKNRELGGV (131 aa)) is regulatory domain.

Belongs to the alpha-IPM synthase/homocitrate synthase family. LeuA type 1 subfamily. In terms of assembly, homodimer. It depends on Mn(2+) as a cofactor.

The protein localises to the cytoplasm. The enzyme catalyses 3-methyl-2-oxobutanoate + acetyl-CoA + H2O = (2S)-2-isopropylmalate + CoA + H(+). It functions in the pathway amino-acid biosynthesis; L-leucine biosynthesis; L-leucine from 3-methyl-2-oxobutanoate: step 1/4. Functionally, catalyzes the condensation of the acetyl group of acetyl-CoA with 3-methyl-2-oxobutanoate (2-ketoisovalerate) to form 3-carboxy-3-hydroxy-4-methylpentanoate (2-isopropylmalate). This Shewanella baltica (strain OS195) protein is 2-isopropylmalate synthase.